The primary structure comprises 1516 residues: Myosin-52 (1516 aa).

The Myosin N-terminal SH3-like domain occupies 7-62; that stretch reads YKGLQCWIPDEQSQWIPGSIKDCRVEGEKAFLTVQDENENETVITVKPDDLNYEGR. The Myosin motor domain occupies 73–766; sequence SDADDLTDLS…VTPLLESARD (694 aa). Residue 167–174 coordinates ATP; the sequence is GESGAGKT. Residues 647 to 669 form an actin-binding region; that stretch reads LVSLMSTINETNAHYIRCIKPNE. 5 consecutive IQ domains span residues 793–813, 818–838, 840–865, 866–886, and 888–917; these read RKRV…RHTE, SSNI…KEFI, TKNS…EKTK, HDAT…KHYK, and LQYY…ESTK. Residues 926–1034 adopt a coiled-coil conformation; the sequence is YRLESRLFEI…LKSQLKNYDM (109 aa). Phosphoserine is present on residues Ser1065 and Ser1072. The 269-residue stretch at 1163–1431 folds into the Dilute domain; it reads ERYCVHTLEY…SELSKNIVAE (269 aa).

Belongs to the TRAFAC class myosin-kinesin ATPase superfamily. Myosin family.

Its subcellular location is the cytoplasm. Functionally, involved in cell wall deposition where it has a role in the localization of mok1. The protein is Myosin-52 (myo52) of Schizosaccharomyces pombe (strain 972 / ATCC 24843) (Fission yeast).